Consider the following 1200-residue polypeptide: NACHT, LRR and PYD domains-containing protein 5 (1200 aa).

The 92-residue stretch at 57-148 folds into the Pyrin domain; that stretch reads SLTFSSYGLQ…SEKARDDMKR (92 aa). The span at 142 to 152 shows a compositional bias: basic and acidic residues; it reads ARDDMKRHSPE. The interval 142–232 is disordered; sequence ARDDMKRHSP…TEEQGHGGDT (91 aa). Positions 173–182 are enriched in polar residues; that stretch reads QAVQQDSATA. 2 stretches are compositionally biased toward low complexity: residues 192-202 and 209-221; these read QAMEQEGATAA and ISQA…ATAA. Residues 280–602 form the NACHT domain; that stretch reads RTVVLHGKSG…ALYYVLEGLE (323 aa). 286–293 is a binding site for ATP; it reads GKSGIGKS. LRR repeat units follow at residues 704–727, 730–753, 780–803, 809–832, 836–863, 865–892, 893–916, 950–973, 979–1002, 1007–1034, 1036–1059, 1064–1092, and 1121–1142; these read LNSF…SFCL, CPYL…AEAC, HPHL…TLCA, TCKI…LWRI, NRNL…ALKH, KCLL…ILTT, SPSL…PLSD, NRSL…LLCR, HCSL…FLAL, NSWL…VMRE, SCHL…SLSC, SRHL…LKQK, and NRHL…MMKL.

The protein belongs to the NLRP family. In terms of assembly, component of the subcortical maternal complex (SCMC), at least composed of NLRP5, KHDC3, OOEP, and TLE6 isoform 1. Within the complex, interacts with OOEP, KHDC3L and TLE6. The SCMC may facilitate translocation of its components between the nuclear and cytoplasmic compartments. As part of the SCMC interacts with the SCMC-associated protein ZBED3. As part of the SCMC interacts with the SCMC-associated protein CFL1/Cofilin-1. Interacts with PRKCE. Interacts with TUBB3 at cytoskeleton microtubules. In terms of processing, phosphorylated by PRKCE. As to expression, expressed in cumulus cells (at protein level). Highly abundant in oocytes and early embryos, however poorly expressed in somatic tissues such as the liver and spinal cord.

It localises to the cytoplasm. It is found in the cytoplasmic vesicle. The protein localises to the secretory vesicle. The protein resides in the cortical granule. Its subcellular location is the mitochondrion. It localises to the nucleus. It is found in the nucleolus. The protein localises to the golgi apparatus. Its function is as follows. Component of the subcortical maternal complex (SCMC), a multiprotein complex that plays a key role in early embryonic development. The SCMC complex is a structural constituent of cytoplasmic lattices, which consist in fibrous structures found in the cytoplasm of oocytes and preimplantation embryos. They are required to store maternal proteins critical for embryonic development, such as proteins that control epigenetic reprogramming of the preimplantation embryo, and prevent their degradation or activation. Required for the localization of cortical granules to the cortex of oocytes, via association with the cortical actin scaffold. Required for cortical actin clearance prior to oocyte exocytosis and prevention of polyspermy. Involved in regulating post-fertilization Ca(2+) release and endoplasmic reticulum storage (ER) storage via regulation of cellular localization. May be involved in the localization of mitochondria to the cytoplasm and perinuclear region in oocytes and early stage embryos, independent of its role in CPL formation. The polypeptide is NACHT, LRR and PYD domains-containing protein 5 (NLRP5) (Homo sapiens (Human)).